The chain runs to 157 residues: Small ribosomal subunit protein uS7 (157 aa).

It belongs to the universal ribosomal protein uS7 family. In terms of assembly, part of the 30S ribosomal subunit. Contacts proteins S9 and S11.

Its function is as follows. One of the primary rRNA binding proteins, it binds directly to 16S rRNA where it nucleates assembly of the head domain of the 30S subunit. Is located at the subunit interface close to the decoding center, probably blocks exit of the E-site tRNA. The polypeptide is Small ribosomal subunit protein uS7 (Acidovorax ebreus (strain TPSY) (Diaphorobacter sp. (strain TPSY))).